The primary structure comprises 163 residues: Nucleotide-binding protein KPK_4305 (163 aa).

This sequence belongs to the YajQ family.

Its function is as follows. Nucleotide-binding protein. This Klebsiella pneumoniae (strain 342) protein is Nucleotide-binding protein KPK_4305.